The sequence spans 189 residues: GMP synthase [glutamine-hydrolyzing] subunit A (189 aa).

In terms of domain architecture, Glutamine amidotransferase type-1 spans 5-189 (KIIVINNYGQ…MNFFKVCEDY (185 aa)). Catalysis depends on cysteine 79, which acts as the Nucleophile. Catalysis depends on residues histidine 166 and glutamate 168.

In terms of assembly, heterodimer composed of a glutamine amidotransferase subunit (A) and a GMP-binding subunit (B).

It carries out the reaction XMP + L-glutamine + ATP + H2O = GMP + L-glutamate + AMP + diphosphate + 2 H(+). Its pathway is purine metabolism; GMP biosynthesis; GMP from XMP (L-Gln route): step 1/1. Functionally, catalyzes the synthesis of GMP from XMP. The sequence is that of GMP synthase [glutamine-hydrolyzing] subunit A from Methanococcoides burtonii (strain DSM 6242 / NBRC 107633 / OCM 468 / ACE-M).